A 247-amino-acid chain; its full sequence is Segregation and condensation protein A (247 aa).

Belongs to the ScpA family. Component of a cohesin-like complex composed of ScpA, ScpB and the Smc homodimer, in which ScpA and ScpB bind to the head domain of Smc. The presence of the three proteins is required for the association of the complex with DNA.

It is found in the cytoplasm. Participates in chromosomal partition during cell division. May act via the formation of a condensin-like complex containing Smc and ScpB that pull DNA away from mid-cell into both cell halves. The chain is Segregation and condensation protein A from Bacillus cereus (strain 03BB102).